A 358-amino-acid chain; its full sequence is Fructose-bisphosphate aldolase 6, cytosolic (358 aa).

Residue S2 is modified to N-acetylserine. R39 contacts substrate. S-glutathionyl cysteine; transient is present on C68. C173 is subject to S-glutathionyl cysteine; transient; alternate. Residue C173 is modified to S-nitrosocysteine; transient; alternate. The active-site Proton acceptor is E183. The active-site Schiff-base intermediate with dihydroxyacetone-P is the K225. Residues 266–268 (SGG) and R298 each bind substrate. A Phosphoserine modification is found at S350. K354 carries the N6,N6,N6-trimethyllysine modification.

It belongs to the class I fructose-bisphosphate aldolase family. Homotetramer. Interacts with TRX1 and TRX3. Interacts with GAPC1 and VDAC3. Post-translationally, S-glutathionylated at Cys-68 and Cys-173. S-nitrosylated at Cys-173. In terms of tissue distribution, expressed in roots, rosettes leaves, cauline leaves, stems and flowers.

It is found in the cytoplasm. Its subcellular location is the cytosol. The protein localises to the nucleus. The protein resides in the mitochondrion. It catalyses the reaction beta-D-fructose 1,6-bisphosphate = D-glyceraldehyde 3-phosphate + dihydroxyacetone phosphate. Its pathway is carbohydrate degradation; glycolysis; D-glyceraldehyde 3-phosphate and glycerone phosphate from D-glucose: step 4/4. Its activity is regulated as follows. Total and irreversible inhibition by S-nitrosoglutathione (GSNO). Partial and reversible inhibition by oxidized glutathione (GSSG). In terms of biological role, fructose-bisphosphate aldolase that plays a key role in glycolysis and gluconeogenesis. Associates with GAPC1 to the outer mitochondrial membrane, in a redox-dependent manner, leading to binding and bundling of actin. Actin binding and bundling occurs under oxidizing conditions and is reversible under reducing conditions. May be part of a redox-dependent retrograde signal transduction network for adaptation upon oxidative stress. This Arabidopsis thaliana (Mouse-ear cress) protein is Fructose-bisphosphate aldolase 6, cytosolic.